The sequence spans 63 residues: Large ribosomal subunit protein uL30 (63 aa).

Belongs to the universal ribosomal protein uL30 family. As to quaternary structure, part of the 50S ribosomal subunit.

The sequence is that of Large ribosomal subunit protein uL30 from Granulibacter bethesdensis (strain ATCC BAA-1260 / CGDNIH1).